Reading from the N-terminus, the 231-residue chain is Ion-translocating oxidoreductase complex subunit E (231 aa).

6 helical membrane passes run 18–38, 39–59, 63–83, 86–106, 125–145, and 182–202; these read ALVQ…ATNA, LGLG…ISTL, TPAE…VSAV, LINA…PLIV, ALSA…MFVL, and PFLL…MLAG.

This sequence belongs to the NqrDE/RnfAE family. The complex is composed of six subunits: RsxA, RsxB, RsxC, RsxD, RsxE and RsxG.

The protein resides in the cell inner membrane. Its function is as follows. Part of a membrane-bound complex that couples electron transfer with translocation of ions across the membrane. Required to maintain the reduced state of SoxR. This is Ion-translocating oxidoreductase complex subunit E from Escherichia coli O127:H6 (strain E2348/69 / EPEC).